The following is a 184-amino-acid chain: MLPNLVILDVTEPRKPSSSAGIRQLTADQIQMLRAFIQKRVKNADDVDDILQCVFLEALRNEHKFQHASKPQTWLCGIALNLIRNHFRKMYRQPYQESWEDDVHTDLEWHGDITHQVDGHRQLARVIEAIDCLPTNMQKVLEVSLEMDGNYQETANTLGVPIGTVRSRLSRARVQLKQQIDPFA.

A Polymerase core binding motif is present at residues 49–62 (DILQCVFLEALRNE). Residues 151–170 (YQETANTLGVPIGTVRSRLS) constitute a DNA-binding region (H-T-H motif).

It belongs to the sigma-70 factor family. ECF subfamily.

Functionally, sigma factors are initiation factors that promote the attachment of RNA polymerase to specific initiation sites and are then released. This sigma factor is involved in the activation of hprD as well as other hrp loci which are involved in plant pathogenicity, hrmA and avr genes. The chain is RNA polymerase sigma factor HrpL (hrpL) from Pseudomonas syringae pv. syringae.